The chain runs to 185 residues: Crossover junction endodeoxyribonuclease RuvC (185 aa).

Catalysis depends on residues Asp16, Glu75, and Asp147. Asp16, Glu75, and Asp147 together coordinate Mg(2+).

Belongs to the RuvC family. As to quaternary structure, homodimer which binds Holliday junction (HJ) DNA. The HJ becomes 2-fold symmetrical on binding to RuvC with unstacked arms; it has a different conformation from HJ DNA in complex with RuvA. In the full resolvosome a probable DNA-RuvA(4)-RuvB(12)-RuvC(2) complex forms which resolves the HJ. Mg(2+) is required as a cofactor.

The protein localises to the cytoplasm. The catalysed reaction is Endonucleolytic cleavage at a junction such as a reciprocal single-stranded crossover between two homologous DNA duplexes (Holliday junction).. The RuvA-RuvB-RuvC complex processes Holliday junction (HJ) DNA during genetic recombination and DNA repair. Endonuclease that resolves HJ intermediates. Cleaves cruciform DNA by making single-stranded nicks across the HJ at symmetrical positions within the homologous arms, yielding a 5'-phosphate and a 3'-hydroxyl group; requires a central core of homology in the junction. The consensus cleavage sequence is 5'-(A/T)TT(C/G)-3'. Cleavage occurs on the 3'-side of the TT dinucleotide at the point of strand exchange. HJ branch migration catalyzed by RuvA-RuvB allows RuvC to scan DNA until it finds its consensus sequence, where it cleaves and resolves the cruciform DNA. This is Crossover junction endodeoxyribonuclease RuvC from Aromatoleum aromaticum (strain DSM 19018 / LMG 30748 / EbN1) (Azoarcus sp. (strain EbN1)).